The following is an 85-amino-acid chain: Toxin BmKAEP (85 aa).

Positions 1–21 (MKLFLLLVISASMLIDGLVNA) are cleaved as a signal peptide. The LCN-type CS-alpha/beta domain maps to 22-82 (DGYIRGSNGC…TWKSESNTCG (61 aa)). 4 cysteine pairs are disulfide-bonded: Cys-31-Cys-81, Cys-35-Cys-56, Cys-42-Cys-63, and Cys-46-Cys-65. At Gly-82 the chain carries Glycine amide.

As to expression, expressed by the venom gland.

The protein resides in the secreted. Its function is as follows. Shows anti-epileptic activity. Shares high homology with depressant insect toxins, but shows very weak toxicity against mammals and insects and no obvious symptoms on insect larvae. May target voltage-gated sodium channel (Nav). The chain is Toxin BmKAEP from Olivierus martensii (Manchurian scorpion).